The following is a 104-amino-acid chain: UPF0145 protein Hlac_1015 (104 aa).

The protein belongs to the UPF0145 family.

The polypeptide is UPF0145 protein Hlac_1015 (Halorubrum lacusprofundi (strain ATCC 49239 / DSM 5036 / JCM 8891 / ACAM 34)).